We begin with the raw amino-acid sequence, 354 residues long: Cytoplasmic tRNA 2-thiolation protein 1 (354 aa).

The protein belongs to the TtcA family. CTU1/NCS6/ATPBD3 subfamily.

The protein resides in the cytoplasm. The protein operates within tRNA modification; 5-methoxycarbonylmethyl-2-thiouridine-tRNA biosynthesis. Plays a central role in 2-thiolation of mcm(5)S(2)U at tRNA wobble positions of tRNA(Lys), tRNA(Glu) and tRNA(Gln). Directly binds tRNAs and probably acts by catalyzing adenylation of tRNAs, an intermediate required for 2-thiolation. It is unclear whether it acts as a sulfurtransferase that transfers sulfur from thiocarboxylated URM1 onto the uridine of tRNAs at wobble position. Prior mcm(5) tRNA modification by the elongator complex is required for 2-thiolation. May also be involved in protein urmylation. The chain is Cytoplasmic tRNA 2-thiolation protein 1 from Laccaria bicolor (strain S238N-H82 / ATCC MYA-4686) (Bicoloured deceiver).